The following is a 114-amino-acid chain: MDACSLTAKQCTPCQGGIPPLTAEEAEKLLVHVPRWELKDAATKLKRTFRFENFMEALDFARKVGELCEAEGHHPDIGIGWGYCRVEFQTHKINGLHENDFIMAAKVDELAAEA.

It belongs to the pterin-4-alpha-carbinolamine dehydratase family.

The catalysed reaction is (4aS,6R)-4a-hydroxy-L-erythro-5,6,7,8-tetrahydrobiopterin = (6R)-L-erythro-6,7-dihydrobiopterin + H2O. In Methylococcus capsulatus (strain ATCC 33009 / NCIMB 11132 / Bath), this protein is Putative pterin-4-alpha-carbinolamine dehydratase.